The following is a 285-amino-acid chain: Bifunctional protein FolD (285 aa).

Residues 164 to 166 (GRS), Ser-189, and Ile-230 contribute to the NADP(+) site.

Belongs to the tetrahydrofolate dehydrogenase/cyclohydrolase family. In terms of assembly, homodimer.

It carries out the reaction (6R)-5,10-methylene-5,6,7,8-tetrahydrofolate + NADP(+) = (6R)-5,10-methenyltetrahydrofolate + NADPH. The enzyme catalyses (6R)-5,10-methenyltetrahydrofolate + H2O = (6R)-10-formyltetrahydrofolate + H(+). The protein operates within one-carbon metabolism; tetrahydrofolate interconversion. Its function is as follows. Catalyzes the oxidation of 5,10-methylenetetrahydrofolate to 5,10-methenyltetrahydrofolate and then the hydrolysis of 5,10-methenyltetrahydrofolate to 10-formyltetrahydrofolate. The protein is Bifunctional protein FolD of Oceanobacillus iheyensis (strain DSM 14371 / CIP 107618 / JCM 11309 / KCTC 3954 / HTE831).